The primary structure comprises 538 residues: Metal transporter Nramp5 (538 aa).

Helical transmembrane passes span 44–64, 77–97, 118–138, 140–160, 181–201, 227–247, 264–284, 324–346, 365–385, 391–411, 427–447, and 467–487; these read FLAH…PGNL, ELLW…SLAA, FVKI…DIPE, IGTA…GVLI, FLIS…LSIV, IALL…ALVL, FFLY…IAVV, SAIV…GTYA, NLMT…IGGS, LIII…IPLL, IYII…NMYF, and VLVG…VVYL. The interval 518-538 is disordered; the sequence is AVDDDEPLPYRDDLADIPLPR.

This sequence belongs to the NRAMP (TC 2.A.55) family.

Its subcellular location is the membrane. Its function is as follows. Probable metal transporter. The protein is Metal transporter Nramp5 (NRAMP5) of Oryza sativa subsp. japonica (Rice).